A 59-amino-acid polypeptide reads, in one-letter code: Small ribosomal subunit protein eS30 (59 aa).

Positions 1-35 (KVHGSLARAGKVRGQTPKVAKQEKKKKKTGRAKRR) are disordered. Basic residues predominate over residues 23-35 (EKKKKKTGRAKRR). Lys-51 is modified (N6-succinyllysine).

The protein belongs to the eukaryotic ribosomal protein eS30 family.

The chain is Small ribosomal subunit protein eS30 (Fau) from Mus spicilegus (Steppe mouse).